A 129-amino-acid polypeptide reads, in one-letter code: Modulator protein MzrA (129 aa).

Residues 1 to 14 (MINFRGRFGRPLWH) lie on the Cytoplasmic side of the membrane. A helical membrane pass occupies residues 15–35 (YLVLPVVLLLLAVILLTPMIV). Over 36–129 (QTESTLKIRP…VFRSNQQNLG (94 aa)) the chain is Periplasmic.

The protein belongs to the MzrA family. Interacts with EnvZ.

The protein resides in the cell inner membrane. In terms of biological role, modulates the activity of the EnvZ/OmpR two-component regulatory system, probably by directly modulating EnvZ enzymatic activity and increasing stability of phosphorylated OmpR. The chain is Modulator protein MzrA from Yersinia pestis (strain Pestoides F).